Reading from the N-terminus, the 82-residue chain is ATP synthase subunit c (82 aa).

A run of 2 helical transmembrane segments spans residues 7–27 and 57–77; these read AASV…PGIG and FAFM…LLFA.

This sequence belongs to the ATPase C chain family. In terms of assembly, F-type ATPases have 2 components, F(1) - the catalytic core - and F(0) - the membrane proton channel. F(1) has five subunits: alpha(3), beta(3), gamma(1), delta(1), epsilon(1). F(0) has four main subunits: a(1), b(1), b'(1) and c(10-14). The alpha and beta chains form an alternating ring which encloses part of the gamma chain. F(1) is attached to F(0) by a central stalk formed by the gamma and epsilon chains, while a peripheral stalk is formed by the delta, b and b' chains.

It is found in the cellular thylakoid membrane. Its function is as follows. F(1)F(0) ATP synthase produces ATP from ADP in the presence of a proton or sodium gradient. F-type ATPases consist of two structural domains, F(1) containing the extramembraneous catalytic core and F(0) containing the membrane proton channel, linked together by a central stalk and a peripheral stalk. During catalysis, ATP synthesis in the catalytic domain of F(1) is coupled via a rotary mechanism of the central stalk subunits to proton translocation. In terms of biological role, key component of the F(0) channel; it plays a direct role in translocation across the membrane. A homomeric c-ring of between 10-14 subunits forms the central stalk rotor element with the F(1) delta and epsilon subunits. In Prochlorococcus marinus (strain NATL1A), this protein is ATP synthase subunit c.